The chain runs to 631 residues: Transforming acidic coiled-coil-containing protein 3 (631 aa).

Serine 2 carries the N-acetylserine modification. A Phosphoserine modification is found at serine 39. Over residues 42-59 (ENVPPQSQAKATNVTFQT) the composition is skewed to polar residues. The disordered stretch occupies residues 42–70 (ENVPPQSQAKATNVTFQTPPRDPQTHRIL). Residue serine 71 is modified to Phosphoserine. 2 necessary but not sufficient for spindle localization regions span residues 311–366 (EESF…PMPV) and 384–631 (KPTE…MEKI). Serine 347 carries the phosphoserine; by AURKA modification. Positions 363 to 385 (PMPVAPITNSTQDTEEESGSGKP) are disordered. Residues 431-630 (QKDLDAVVNV…CDDLISKMEK (200 aa)) adopt a coiled-coil conformation.

Belongs to the TACC family. In terms of assembly, interacts with GCN5L2 and PCAF. The coiled coil C-terminal region interacts with AH receptor nuclear translocator protein (ARNT) and ARNT2. Interacts with CCDC100/CEP120. Interacts with CKAP5 independently of clathrin. Interacts with CKAP5 and clathrin forming the TACC3/ch-TOG/clathrin complex located at spindle inter-microtubules bridges; TACC3 (phosphorylated at Ser-347 by AURKA) and CLTC are proposed to form a composite microtubule interaction surface. As to expression, embryonically expressed.

It is found in the cytoplasm. Its subcellular location is the cytoskeleton. It localises to the microtubule organizing center. The protein localises to the centrosome. The protein resides in the spindle pole. Its function is as follows. Plays a role in the microtubule-dependent coupling of the nucleus and the centrosome. Involved in the processes that regulate centrosome-mediated interkinetic nuclear migration (INM) of neural progenitors. Acts as a component of the TACC3/ch-TOG/clathrin complex proposed to contribute to stabilization of kinetochore fibers of the mitotic spindle by acting as inter-microtubule bridge. The TACC3/ch-TOG/clathrin complex is required for the maintenance of kinetochore fiber tension. May be involved in the control of cell growth and differentiation. May have a role in embryonic development. The polypeptide is Transforming acidic coiled-coil-containing protein 3 (Tacc3) (Mus musculus (Mouse)).